The sequence spans 374 residues: Pectate lyase 2 (374 aa).

A signal peptide spans 1–22 (MKYLLPTAAAGLLLLAAQPAMA). Residues Cys93 and Cys176 are joined by a disulfide bond. Asp150, Asp152, Glu187, and Asp191 together coordinate Ca(2+). Residue Arg239 is part of the active site. An intrachain disulfide couples Cys350 to Cys373.

Belongs to the polysaccharide lyase 1 family. PLADES subfamily. The cofactor is Ca(2+).

It is found in the secreted. The enzyme catalyses Eliminative cleavage of (1-&gt;4)-alpha-D-galacturonan to give oligosaccharides with 4-deoxy-alpha-D-galact-4-enuronosyl groups at their non-reducing ends.. The protein operates within glycan metabolism; pectin degradation; 2-dehydro-3-deoxy-D-gluconate from pectin: step 2/5. Functionally, involved in maceration and soft-rotting of plant tissue. This is Pectate lyase 2 (pel2) from Pectobacterium carotovorum (Erwinia carotovora).